The following is a 523-amino-acid chain: Bifunctional purine biosynthesis protein PurH (523 aa).

The MGS-like domain occupies 1 to 145; the sequence is MIKQALLSVS…KNHRDVTVIV (145 aa).

It belongs to the PurH family.

It carries out the reaction (6R)-10-formyltetrahydrofolate + 5-amino-1-(5-phospho-beta-D-ribosyl)imidazole-4-carboxamide = 5-formamido-1-(5-phospho-D-ribosyl)imidazole-4-carboxamide + (6S)-5,6,7,8-tetrahydrofolate. The enzyme catalyses IMP + H2O = 5-formamido-1-(5-phospho-D-ribosyl)imidazole-4-carboxamide. Its pathway is purine metabolism; IMP biosynthesis via de novo pathway; 5-formamido-1-(5-phospho-D-ribosyl)imidazole-4-carboxamide from 5-amino-1-(5-phospho-D-ribosyl)imidazole-4-carboxamide (10-formyl THF route): step 1/1. It functions in the pathway purine metabolism; IMP biosynthesis via de novo pathway; IMP from 5-formamido-1-(5-phospho-D-ribosyl)imidazole-4-carboxamide: step 1/1. The sequence is that of Bifunctional purine biosynthesis protein PurH from Cupriavidus pinatubonensis (strain JMP 134 / LMG 1197) (Cupriavidus necator (strain JMP 134)).